A 277-amino-acid polypeptide reads, in one-letter code: MKQSFSRPHFENQELDSLKIGEKIFNSRLMVGTGKYNNLKEAIKSIDYSGANIVTVAIRRAQNSKNLGRSNLLDGLDWSKLWILPNTAGCESAEEAVRIAALGREIVKKLGQTDNNFIKLEVIPDSHYLFPDPIGTLKAAEYLVKKGFIVMPYIGADPVLAKQLENIGCATVMPLASPIGSGQGLKNLLNLKIIIENSNIPVIIDAGIGTPSEAAKVMEMGASGVLVNTAIARAPNSPQMAKAMSLAVKSGRLTHTAGRMIINQTANPSSPIFGISK.

The active-site Schiff-base intermediate with DXP is the lysine 119. 1-deoxy-D-xylulose 5-phosphate-binding positions include glycine 180, 206-207, and 228-229; these read AG and NT.

The protein belongs to the ThiG family. In terms of assembly, homotetramer. Forms heterodimers with either ThiH or ThiS.

Its subcellular location is the plastid. The protein localises to the chloroplast. It carries out the reaction [ThiS sulfur-carrier protein]-C-terminal-Gly-aminoethanethioate + 2-iminoacetate + 1-deoxy-D-xylulose 5-phosphate = [ThiS sulfur-carrier protein]-C-terminal Gly-Gly + 2-[(2R,5Z)-2-carboxy-4-methylthiazol-5(2H)-ylidene]ethyl phosphate + 2 H2O + H(+). The protein operates within cofactor biosynthesis; thiamine diphosphate biosynthesis. In terms of biological role, catalyzes the rearrangement of 1-deoxy-D-xylulose 5-phosphate (DXP) to produce the thiazole phosphate moiety of thiamine. Sulfur is provided by the thiocarboxylate moiety of the carrier protein ThiS. In vitro, sulfur can be provided by H(2)S. This chain is Thiazole synthase, found in Pyropia yezoensis (Susabi-nori).